Reading from the N-terminus, the 187-residue chain is Inner membrane-spanning protein YciB (187 aa).

A run of 5 helical transmembrane segments spans residues 22–42 (IYVATGALIVATAVQLIVTYA), 50–70 (MQLITFVIVTIFGSMTIFFHD), 80–100 (IIYVVLAVGLTASHLMGKSVV), 118–138 (INWAWVGFFSFFAGLNIYIAY), and 148–168 (FKVFGMLIATFAYMIATGVYI).

It belongs to the YciB family.

It localises to the cell inner membrane. In terms of biological role, plays a role in cell envelope biogenesis, maintenance of cell envelope integrity and membrane homeostasis. In Vibrio parahaemolyticus serotype O3:K6 (strain RIMD 2210633), this protein is Inner membrane-spanning protein YciB.